The following is a 65-amino-acid chain: Metallothionein (65 aa).

This sequence belongs to the metallothionein superfamily. Type 4 family.

Functionally, metallothioneins have a high content of cysteine residues that bind various heavy metals. The sequence is that of Metallothionein from Paracentrotus lividus (Common sea urchin).